The primary structure comprises 258 residues: Thiazole synthase (258 aa).

Lys100 acts as the Schiff-base intermediate with DXP in catalysis. 1-deoxy-D-xylulose 5-phosphate contacts are provided by residues Gly161, 187-188, and 209-210; these read AG and NS.

It belongs to the ThiG family. In terms of assembly, homotetramer. Forms heterodimers with either ThiH or ThiS.

It is found in the plastid. It localises to the chloroplast. The catalysed reaction is [ThiS sulfur-carrier protein]-C-terminal-Gly-aminoethanethioate + 2-iminoacetate + 1-deoxy-D-xylulose 5-phosphate = [ThiS sulfur-carrier protein]-C-terminal Gly-Gly + 2-[(2R,5Z)-2-carboxy-4-methylthiazol-5(2H)-ylidene]ethyl phosphate + 2 H2O + H(+). Its pathway is cofactor biosynthesis; thiamine diphosphate biosynthesis. Its function is as follows. Catalyzes the rearrangement of 1-deoxy-D-xylulose 5-phosphate (DXP) to produce the thiazole phosphate moiety of thiamine. Sulfur is provided by the thiocarboxylate moiety of the carrier protein ThiS. In vitro, sulfur can be provided by H(2)S. This is Thiazole synthase from Cyanidioschyzon merolae (strain NIES-3377 / 10D) (Unicellular red alga).